The sequence spans 237 residues: 2,3-bisphosphoglycerate-dependent phosphoglycerate mutase (237 aa).

Residues 8 to 15, 21 to 22, Arg60, 87 to 90, Lys98, 114 to 115, and 180 to 181 each bind substrate; these read RHGQSQWN, TG, ERHY, RR, and GN. The Tele-phosphohistidine intermediate role is filled by His9. Glu87 acts as the Proton donor/acceptor in catalysis.

The protein belongs to the phosphoglycerate mutase family. BPG-dependent PGAM subfamily. Homodimer.

It catalyses the reaction (2R)-2-phosphoglycerate = (2R)-3-phosphoglycerate. Its pathway is carbohydrate degradation; glycolysis; pyruvate from D-glyceraldehyde 3-phosphate: step 3/5. In terms of biological role, catalyzes the interconversion of 2-phosphoglycerate and 3-phosphoglycerate. The protein is 2,3-bisphosphoglycerate-dependent phosphoglycerate mutase of Caulobacter vibrioides (strain ATCC 19089 / CIP 103742 / CB 15) (Caulobacter crescentus).